The sequence spans 376 residues: Dihydroorotate dehydrogenase (quinone) (376 aa).

Residues 74–78 (AGFDK) and T98 contribute to the FMN site. K78 is a substrate binding site. Substrate is bound at residue 123–127 (NHMGF). 2 residues coordinate FMN: N152 and N185. Residue N185 participates in substrate binding. Residue S188 is the Nucleophile of the active site. N190 lines the substrate pocket. Residues K223 and T251 each coordinate FMN. Residue 252–253 (NT) coordinates substrate. FMN is bound by residues G280, G309, and 330 to 331 (YT). The interval 352 to 376 (RNPAPSSPERMPTGIQSGRKIVMDP) is disordered.

This sequence belongs to the dihydroorotate dehydrogenase family. Type 2 subfamily. Monomer. FMN serves as cofactor.

It localises to the cell membrane. The catalysed reaction is (S)-dihydroorotate + a quinone = orotate + a quinol. It participates in pyrimidine metabolism; UMP biosynthesis via de novo pathway; orotate from (S)-dihydroorotate (quinone route): step 1/1. Functionally, catalyzes the conversion of dihydroorotate to orotate with quinone as electron acceptor. The sequence is that of Dihydroorotate dehydrogenase (quinone) from Synechococcus sp. (strain JA-3-3Ab) (Cyanobacteria bacterium Yellowstone A-Prime).